We begin with the raw amino-acid sequence, 329 residues long: MQNQLNALLQSAKKSVADAQSEIVLEEIRVDYLGKKGKLTELLKSVGQMPADQRPLLGKAVNEIKREIQQLLNAKSTQLREKSLQEKLNKEKVDITLRGRYDHLGAIHPISRVSERVSQLFSMLGFQIAEGPEIENEYYNFEALNIPADHPARTMADTFYFSGDKLLRTHTSPVQIREMEKQGVPIRLIALGRVYRRDLDQTHTPMFHQVEGLVIDKRSTFANLKGLLQQFLNCFFEKDVRLRFRPSYFPFTEPSAEVDIYQPRTDKWLEVLGCGMVHPNVLRNLNIDPDEYSGFAFGIGLDRLAMLRYEVTDLRLFFENDLRFLGQFK.

Glu253 provides a ligand contact to Mg(2+).

Belongs to the class-II aminoacyl-tRNA synthetase family. Phe-tRNA synthetase alpha subunit type 1 subfamily. In terms of assembly, tetramer of two alpha and two beta subunits. Mg(2+) is required as a cofactor.

Its subcellular location is the cytoplasm. It catalyses the reaction tRNA(Phe) + L-phenylalanine + ATP = L-phenylalanyl-tRNA(Phe) + AMP + diphosphate + H(+). The chain is Phenylalanine--tRNA ligase alpha subunit from Coxiella burnetii (strain CbuK_Q154) (Coxiella burnetii (strain Q154)).